A 360-amino-acid chain; its full sequence is MLMFLTHFAEHVTPFNVFRYITFRTGGAMITSALIVFLFGPTIINSLRVRQGKGQPIRADGPQTHFKKAGTPTMGGLMIMTGILASCLLWANLASVYVWVVLMVSVGFGAIGFYDDYLKVTKQSDKGFSGKARLGIEFLIAAIAAFTIMRAGQEPFSSSLTFPFVKQLVINLSWFFILFAAFVMVGAGNAVNLTDGLDGLAIVPVMVAAASFGFIAYLSGNAIFADYLQIHFVPGTGELAVVLGAVIGAGLGFLWFNAPPAAIFMGDTGSLALGGMLGTVAVATKHEIVLAIIGGLFVMEALSVIIQVGFFKMTGRRVFLMAPIHHHFEKKGWTESQVVIRFWIVAIILAMIGLSTLKLR.

The next 10 helical transmembrane spans lie at G27–L47, T71–A91, L93–F113, F128–I148, L168–G188, G199–S219, L239–P259, A262–V282, I288–V308, and Q337–L357.

It belongs to the glycosyltransferase 4 family. MraY subfamily. Mg(2+) serves as cofactor.

It localises to the cell inner membrane. The enzyme catalyses UDP-N-acetyl-alpha-D-muramoyl-L-alanyl-gamma-D-glutamyl-meso-2,6-diaminopimeloyl-D-alanyl-D-alanine + di-trans,octa-cis-undecaprenyl phosphate = di-trans,octa-cis-undecaprenyl diphospho-N-acetyl-alpha-D-muramoyl-L-alanyl-D-glutamyl-meso-2,6-diaminopimeloyl-D-alanyl-D-alanine + UMP. The protein operates within cell wall biogenesis; peptidoglycan biosynthesis. Catalyzes the initial step of the lipid cycle reactions in the biosynthesis of the cell wall peptidoglycan: transfers peptidoglycan precursor phospho-MurNAc-pentapeptide from UDP-MurNAc-pentapeptide onto the lipid carrier undecaprenyl phosphate, yielding undecaprenyl-pyrophosphoryl-MurNAc-pentapeptide, known as lipid I. In Brucella ovis (strain ATCC 25840 / 63/290 / NCTC 10512), this protein is Phospho-N-acetylmuramoyl-pentapeptide-transferase.